Here is a 97-residue protein sequence, read N- to C-terminus: MNKKKTKICCIYHPQDEDEEGCTSDHQHDELPESSSSSSSESENDKDLGFDERRKRRVERRRRKLRDNTDSAPNAYEVQPDYSEHRKKMMEKKSNNT.

The disordered stretch occupies residues 1–97 (MNKKKTKICC…KMMEKKSNNT (97 aa)). Basic and acidic residues predominate over residues 43–53 (ENDKDLGFDER). Basic residues predominate over residues 54 to 65 (RKRRVERRRRKL).

Belongs to the YPI1 family.

The protein resides in the nucleus. Functionally, regulator of type 1 phosphatases which maintains protein phosphatase activity under strict control. The sequence is that of Type 1 phosphatases regulator YPI2 (YPI2) from Vanderwaltozyma polyspora (strain ATCC 22028 / DSM 70294 / BCRC 21397 / CBS 2163 / NBRC 10782 / NRRL Y-8283 / UCD 57-17) (Kluyveromyces polysporus).